The primary structure comprises 315 residues: Initiation factor TFIIB homolog (315 aa).

It belongs to the asfivirus C315R family.

Functionally, putative initation factor. The sequence is that of Initiation factor TFIIB homolog from Ornithodoros (relapsing fever ticks).